The following is a 370-amino-acid chain: tRNA-specific 2-thiouridylase MnmA 1 (370 aa).

Residues 9 to 16 (GMSGGVDS) and methionine 35 contribute to the ATP site. The interval 95 to 97 (NPD) is interaction with target base in tRNA. Cysteine 100 acts as the Nucleophile in catalysis. Cysteines 100 and 196 form a disulfide. Position 124 (glycine 124) interacts with ATP. The tract at residues 146–148 (KDQ) is interaction with tRNA. Cysteine 196 serves as the catalytic Cysteine persulfide intermediate. The tract at residues 306–307 (RY) is interaction with tRNA.

Belongs to the MnmA/TRMU family.

It is found in the cytoplasm. The catalysed reaction is S-sulfanyl-L-cysteinyl-[protein] + uridine(34) in tRNA + AH2 + ATP = 2-thiouridine(34) in tRNA + L-cysteinyl-[protein] + A + AMP + diphosphate + H(+). Catalyzes the 2-thiolation of uridine at the wobble position (U34) of tRNA, leading to the formation of s(2)U34. This chain is tRNA-specific 2-thiouridylase MnmA 1, found in Geobacillus kaustophilus (strain HTA426).